Reading from the N-terminus, the 132-residue chain is Fatty acid-binding protein, adipocyte (132 aa).

C2 carries the post-translational modification N-acetylcysteine. Phosphoserine is present on S13. Position 20 is a phosphotyrosine; by Tyr-kinases (Y20). The Nuclear localization signal motif lies at 22 to 32 (KEVGVGFATRK). 127 to 129 (RVY) provides a ligand contact to a fatty acid.

This sequence belongs to the calycin superfamily. Fatty-acid binding protein (FABP) family. In terms of assembly, monomer. Homodimer. Interacts with PPARG.

The protein resides in the cytoplasm. The protein localises to the nucleus. Lipid transport protein in adipocytes. Binds both long chain fatty acids and retinoic acid. Delivers long-chain fatty acids and retinoic acid to their cognate receptors in the nucleus. In Cervus elaphus (Red deer), this protein is Fatty acid-binding protein, adipocyte (FABP4).